The following is a 95-amino-acid chain: Toxin HigB-1 (95 aa).

Its function is as follows. Toxic component of a type II toxin-antitoxin (TA) system. Inhibits translation by cleavage of mRNA. In Vibrio cholerae serotype O1 (strain ATCC 39315 / El Tor Inaba N16961), this protein is Toxin HigB-1 (higB-1).